A 337-amino-acid polypeptide reads, in one-letter code: Ornithine carbamoyltransferase, catabolic (337 aa).

Carbamoyl phosphate contacts are provided by residues 57–60, Gln-84, Arg-108, and 135–138; these read STRT and HPTQ. L-ornithine is bound by residues Asn-167, Asp-231, and 235 to 236; that span reads SM. Residues 272–273 and Arg-317 contribute to the carbamoyl phosphate site; that span reads CL.

This sequence belongs to the aspartate/ornithine carbamoyltransferase superfamily. OTCase family.

Its subcellular location is the cytoplasm. The catalysed reaction is carbamoyl phosphate + L-ornithine = L-citrulline + phosphate + H(+). The protein operates within amino-acid degradation; L-arginine degradation via ADI pathway; carbamoyl phosphate from L-arginine: step 2/2. Its function is as follows. Reversibly catalyzes the transfer of the carbamoyl group from carbamoyl phosphate (CP) to the N(epsilon) atom of ornithine (ORN) to produce L-citrulline. This chain is Ornithine carbamoyltransferase, catabolic (arcB), found in Streptococcus pyogenes serotype M1.